A 330-amino-acid chain; its full sequence is Biotin synthase (330 aa).

In terms of domain architecture, Radical SAM core spans 53 to 276 (NNIRLNVLLS…VFPFKELRLS (224 aa)). Residues C68, C72, and C75 each contribute to the [4Fe-4S] cluster site. [2Fe-2S] cluster is bound by residues C112, C144, C204, and R274.

Belongs to the radical SAM superfamily. Biotin synthase family. As to quaternary structure, homodimer. It depends on [4Fe-4S] cluster as a cofactor. [2Fe-2S] cluster serves as cofactor.

The catalysed reaction is (4R,5S)-dethiobiotin + (sulfur carrier)-SH + 2 reduced [2Fe-2S]-[ferredoxin] + 2 S-adenosyl-L-methionine = (sulfur carrier)-H + biotin + 2 5'-deoxyadenosine + 2 L-methionine + 2 oxidized [2Fe-2S]-[ferredoxin]. It participates in cofactor biosynthesis; biotin biosynthesis; biotin from 7,8-diaminononanoate: step 2/2. In terms of biological role, catalyzes the conversion of dethiobiotin (DTB) to biotin by the insertion of a sulfur atom into dethiobiotin via a radical-based mechanism. The polypeptide is Biotin synthase (Streptococcus agalactiae serotype V (strain ATCC BAA-611 / 2603 V/R)).